The following is a 72-amino-acid chain: Cell division protein ZapB (72 aa).

A coiled-coil region spans residues 1 to 71; it reads MSLEILDQLE…IRSLLGKFDN (71 aa).

It belongs to the ZapB family. As to quaternary structure, homodimer. The ends of the coiled-coil dimer bind to each other, forming polymers. Interacts with FtsZ.

Its subcellular location is the cytoplasm. In terms of biological role, non-essential, abundant cell division factor that is required for proper Z-ring formation. It is recruited early to the divisome by direct interaction with FtsZ, stimulating Z-ring assembly and thereby promoting cell division earlier in the cell cycle. Its recruitment to the Z-ring requires functional FtsA or ZipA. The protein is Cell division protein ZapB of Haemophilus influenzae (strain 86-028NP).